Consider the following 514-residue polypeptide: 2,3-bisphosphoglycerate-independent phosphoglycerate mutase (514 aa).

Mn(2+) is bound by residues Asp-14 and Ser-64. Ser-64 acts as the Phosphoserine intermediate in catalysis. Substrate contacts are provided by residues His-125, 155-156 (RD), Arg-187, Arg-193, 263-266 (RADR), and Lys-336. Residues Asp-403, His-407, Asp-444, His-445, and His-463 each coordinate Mn(2+).

It belongs to the BPG-independent phosphoglycerate mutase family. Monomer. It depends on Mn(2+) as a cofactor.

It carries out the reaction (2R)-2-phosphoglycerate = (2R)-3-phosphoglycerate. The protein operates within carbohydrate degradation; glycolysis; pyruvate from D-glyceraldehyde 3-phosphate: step 3/5. Catalyzes the interconversion of 2-phosphoglycerate and 3-phosphoglycerate. This is 2,3-bisphosphoglycerate-independent phosphoglycerate mutase from Shewanella oneidensis (strain ATCC 700550 / JCM 31522 / CIP 106686 / LMG 19005 / NCIMB 14063 / MR-1).